We begin with the raw amino-acid sequence, 299 residues long: DNA-binding transcriptional repressor CapW (299 aa).

The segment covering 1 to 15 (MPDNFREGDKQDSQK) has biased composition (basic and acidic residues). The segment at 1–21 (MPDNFREGDKQDSQKGRQGAR) is disordered. Residues 1-95 (MPDNFREGDK…LFQPVYMTSS (95 aa)) are winged HTH domain. The WYL domain stretch occupies residues 96–207 (LECYLNDLLQ…LSRIVQAQNA (112 aa)). Positions 131 to 211 (LRRLDTDVVS…VQAQNAGPDE (81 aa)) constitute a WYL domain. The interval 156–200 (YQSMSDPQGSKRTLTPHSLVHDGYRWHTRAWCHKRGEYRDFLLSR) is probable ligand-binding region. Residues 208 to 299 (GPDEERANGD…KDEIYALLKQ (92 aa)) are WCX domain.

Homodimer.

In terms of biological role, transcriptional regulator of a CBASS antivirus system. CBASS (cyclic oligonucleotide-based antiphage signaling system) provides immunity against bacteriophage. The CD-NTase protein synthesizes cyclic nucleotides in response to infection; these serve as specific second messenger signals. The signals activate a diverse range of effectors, leading to bacterial cell death and thus abortive phage infection. A type III CBASS system. Expression of this CBASS system (Cap18-Cap6-Cap7-CdnC-CapW-Cap17) in a susceptible E.coli (strain MG1655) confers resistance to bacteriophage P1. Binds specifically to and represses expression from the CBASS promoter, found between the genes for divergently transcribed capW and cdnC. The chain is DNA-binding transcriptional repressor CapW from Escherichia coli (strain KTE188).